Reading from the N-terminus, the 504-residue chain is UDP-N-acetylmuramoylalanine--D-glutamate ligase (504 aa).

Residue 132–138 (GTNGKTT) coordinates ATP. The segment at 284–310 (AQDRDATDEPAPTRRRKSESTAPPDIG) is disordered.

It belongs to the MurCDEF family.

It localises to the cytoplasm. The catalysed reaction is UDP-N-acetyl-alpha-D-muramoyl-L-alanine + D-glutamate + ATP = UDP-N-acetyl-alpha-D-muramoyl-L-alanyl-D-glutamate + ADP + phosphate + H(+). Its pathway is cell wall biogenesis; peptidoglycan biosynthesis. In terms of biological role, cell wall formation. Catalyzes the addition of glutamate to the nucleotide precursor UDP-N-acetylmuramoyl-L-alanine (UMA). The protein is UDP-N-acetylmuramoylalanine--D-glutamate ligase of Paraburkholderia phymatum (strain DSM 17167 / CIP 108236 / LMG 21445 / STM815) (Burkholderia phymatum).